A 180-amino-acid polypeptide reads, in one-letter code: Cell wall / vacuolar inhibitor of fructosidase 2 (180 aa).

The N-terminal stretch at 1–23 (MASSLIFLLLVTLTFSASTLISA) is a signal peptide. A glycan (N-linked (GlcNAc...) asparagine) is linked at N26. C35 and C44 are disulfide-bonded. Residues N73 and N84 are each glycosylated (N-linked (GlcNAc...) asparagine). C101 and C141 are disulfide-bonded.

Belongs to the PMEI family. As to expression, mostly expressed at low levels in seedlings, stems, leaves and flowers (in all organs), and, to a lower extent, in roots and siliques.

It is found in the vacuole. In terms of biological role, inhibits fructosidases from both cell wall (cell wall invertase CWI) and vacuoles (vacuolar invertase VI). This Arabidopsis thaliana (Mouse-ear cress) protein is Cell wall / vacuolar inhibitor of fructosidase 2 (C/VIF2).